Reading from the N-terminus, the 211-residue chain is Stromal cell-derived factor 2 (211 aa).

The first 18 residues, 1–18, serve as a signal peptide directing secretion; it reads MAVVSLLLFGGLWSAVGS. MIR domains lie at 21-75, 83-138, and 139-193; these read LAVV…IRGK, GTPI…VLCN, and GPYW…AMEG.

It localises to the secreted. This is Stromal cell-derived factor 2 (SDF2) from Bos taurus (Bovine).